Here is a 98-residue protein sequence, read N- to C-terminus: NADH-ubiquinone oxidoreductase chain 4L (98 aa).

3 helical membrane passes run 1–21 (MSLTYMNMLMAFTTSLLGLLM), 29–49 (SLLCLEGMMLSLFVMVTITIL), and 61–81 (IILLVFAACEAALGLSLLVMV).

This sequence belongs to the complex I subunit 4L family. Core subunit of respiratory chain NADH dehydrogenase (Complex I) which is composed of 45 different subunits.

It is found in the mitochondrion inner membrane. The catalysed reaction is a ubiquinone + NADH + 5 H(+)(in) = a ubiquinol + NAD(+) + 4 H(+)(out). Core subunit of the mitochondrial membrane respiratory chain NADH dehydrogenase (Complex I) which catalyzes electron transfer from NADH through the respiratory chain, using ubiquinone as an electron acceptor. Part of the enzyme membrane arm which is embedded in the lipid bilayer and involved in proton translocation. This Ectophylla alba (White bat) protein is NADH-ubiquinone oxidoreductase chain 4L (MT-ND4L).